The chain runs to 872 residues: DNA mismatch repair protein MutS (872 aa).

Residue 632-639 (GPNMGGKS) participates in ATP binding.

The protein belongs to the DNA mismatch repair MutS family.

This protein is involved in the repair of mismatches in DNA. It is possible that it carries out the mismatch recognition step. This protein has a weak ATPase activity. The chain is DNA mismatch repair protein MutS from Colwellia psychrerythraea (strain 34H / ATCC BAA-681) (Vibrio psychroerythus).